Here is a 111-residue protein sequence, read N- to C-terminus: Nucleoid-associated protein NGK_1136 (111 aa).

Belongs to the YbaB/EbfC family. In terms of assembly, homodimer.

Its subcellular location is the cytoplasm. The protein resides in the nucleoid. Binds to DNA and alters its conformation. May be involved in regulation of gene expression, nucleoid organization and DNA protection. The protein is Nucleoid-associated protein NGK_1136 of Neisseria gonorrhoeae (strain NCCP11945).